A 465-amino-acid chain; its full sequence is Neutrophil collagenase (465 aa).

Positions 1 to 20 are cleaved as a signal peptide; it reads MFRLKTLPLLIFLHTQLANA. A propeptide spans 21–100 (activation peptide); that stretch reads FPVPEHLEEK…CGVPDSGDFL (80 aa). N-linked (GlcNAc...) asparagine glycosylation is present at asparagine 55. A Cysteine switch motif is present at residues 89-96; sequence PRCGVPDS. A Zn(2+)-binding site is contributed by cysteine 91. Asparagine 112 is a glycosylation site (N-linked (GlcNAc...) asparagine). Aspartate 157 contributes to the Ca(2+) binding site. Positions 167 and 169 each coordinate Zn(2+). 4 residues coordinate Ca(2+): aspartate 174, glycine 175, asparagine 177, and isoleucine 179. Histidine 182 provides a ligand contact to Zn(2+). Glycine 189, glycine 191, and aspartate 193 together coordinate Ca(2+). Histidine 195 contributes to the Zn(2+) binding site. Ca(2+) contacts are provided by aspartate 197 and glutamate 200. Zn(2+) is bound at residue histidine 217. Glutamate 218 is an active-site residue. The Zn(2+) site is built by histidine 221 and histidine 227. Hemopexin repeat units lie at residues 276–325, 326–372, 374–420, and 421–464; these read PKAC…WPFL, PNGL…GFPR, VQAI…FPGV, and NCRV…WLNC. The cysteines at positions 279 and 464 are disulfide-linked. A Ca(2+)-binding site is contributed by aspartate 286. Residues aspartate 378 and aspartate 425 each contribute to the Ca(2+) site.

Belongs to the peptidase M10A family. Ca(2+) serves as cofactor. Requires Zn(2+) as cofactor. Neutrophils. Expressed in uterus. Low levels in kidney and muscle.

It localises to the cytoplasmic granule. The protein localises to the secreted. The protein resides in the extracellular space. It is found in the extracellular matrix. The enzyme catalyses Cleavage of interstitial collagens in the triple helical domain. Unlike EC 3.4.24.7, this enzyme cleaves type III collagen more slowly than type I.. With respect to regulation, cannot be activated without removal of the activation peptide. Activated by matrilysin. In terms of biological role, can degrade fibrillar type I, II, and III collagens. May play a role in the degradation of collagen fibers during uterine involution. The chain is Neutrophil collagenase (Mmp8) from Mus musculus (Mouse).